The sequence spans 111 residues: Large ribosomal subunit protein uL22 (111 aa).

It belongs to the universal ribosomal protein uL22 family. As to quaternary structure, part of the 50S ribosomal subunit.

This protein binds specifically to 23S rRNA; its binding is stimulated by other ribosomal proteins, e.g. L4, L17, and L20. It is important during the early stages of 50S assembly. It makes multiple contacts with different domains of the 23S rRNA in the assembled 50S subunit and ribosome. Its function is as follows. The globular domain of the protein is located near the polypeptide exit tunnel on the outside of the subunit, while an extended beta-hairpin is found that lines the wall of the exit tunnel in the center of the 70S ribosome. The sequence is that of Large ribosomal subunit protein uL22 from Chlamydia trachomatis serovar L2 (strain ATCC VR-902B / DSM 19102 / 434/Bu).